A 648-amino-acid polypeptide reads, in one-letter code: L-aspartate oxidase 2-b, chloroplastic (648 aa).

FAD is bound by residues 98 to 101 (SGIA), lysine 120, 127 to 134 (STNYAQGG), and aspartate 298. The active-site Proton donor/acceptor is the arginine 373. FAD-binding positions include glutamate 458 and 474 to 475 (SL).

This sequence belongs to the FAD-dependent oxidoreductase 2 family. NadB subfamily. FAD serves as cofactor.

Its subcellular location is the plastid. The protein resides in the chloroplast. It catalyses the reaction L-aspartate + O2 = iminosuccinate + H2O2. The protein operates within alkaloid biosynthesis; nicotine biosynthesis. It functions in the pathway cofactor biosynthesis; NAD(+) biosynthesis; iminoaspartate from L-aspartate (oxidase route): step 1/1. Its function is as follows. Involved in the biosynthesis of pyridine alkaloid natural products, leading mainly to the production of anabasine, anatabine, nicotine and nornicotine, effective deterrents against herbivores with antiparasitic and pesticide properties (neurotoxins); nornicotine serves as the precursor in the synthesis of the carcinogen compound N'-nitrosonornicotine (NNN). Catalyzes the oxidation of L-aspartate to iminoaspartate. This Nicotiana tabacum (Common tobacco) protein is L-aspartate oxidase 2-b, chloroplastic.